A 203-amino-acid chain; its full sequence is MGEEFQVGATAVGIRAKDGVVLAAEKRVSYGFYTLSTAGKKVFIVNDKLAIASAGIIADMQALAKILKLNARSYELEVKKKPTVKAMAKLLSVVMFSRRFMPFYAEVLVGGVDEEGPHLIVMDPLGSLIEDNYAALGTGAKLAVSLLDASYRPDMTVEEAKKLAVQAVKAAIERDPVSGGGIDLVVVDGGGAREEEVKVQVVI.

Positions 1–9 (MGEEFQVGA) are cleaved as a propeptide — removed in mature form; by autocatalysis. Catalysis depends on Thr10, which acts as the Nucleophile.

The protein belongs to the peptidase T1B family. As to quaternary structure, the 20S proteasome core is composed of 14 alpha and 14 beta subunits that assemble into four stacked heptameric rings, resulting in a barrel-shaped structure. The two inner rings, each composed of seven catalytic beta subunits, are sandwiched by two outer rings, each composed of seven alpha subunits. The catalytic chamber with the active sites is on the inside of the barrel. Has a gated structure, the ends of the cylinder being occluded by the N-termini of the alpha-subunits. Is capped at one or both ends by the proteasome regulatory ATPase, PAN.

The protein localises to the cytoplasm. The enzyme catalyses Cleavage of peptide bonds with very broad specificity.. With respect to regulation, the formation of the proteasomal ATPase PAN-20S proteasome complex, via the docking of the C-termini of PAN into the intersubunit pockets in the alpha-rings, triggers opening of the gate for substrate entry. Interconversion between the open-gate and close-gate conformations leads to a dynamic regulation of the 20S proteasome proteolysis activity. Component of the proteasome core, a large protease complex with broad specificity involved in protein degradation. The polypeptide is Proteasome subunit beta 2 (Pyrobaculum neutrophilum (strain DSM 2338 / JCM 9278 / NBRC 100436 / V24Sta) (Thermoproteus neutrophilus)).